The chain runs to 247 residues: MSHRDTLFSAPIASLGDWTFDERVAEVFPDMIQRSVPGYSNIISMIGMLAERFVQPNTQVYDLGCSLGAATLSVRRNISHPDCRIIAIDNSPAMVERCRRHIDAYKAPTPVEVIEGDIRDVTIENASLVILNFTIQFLEPGDRQAILNKVYQGLNPGGALVLSEKFSFEDAHVGELLFNMHHDFKRANGYSELEISQKRSMLENVMLTDSVETHKARLRQAGFEHAELWFQCFNFGSLVAVKAGEQA.

S-adenosyl-L-methionine-binding positions include Y39, 64–66 (GCS), 89–90 (DN), 117–118 (DI), N132, and R199.

The protein belongs to the class I-like SAM-binding methyltransferase superfamily. Cx-SAM synthase family. Homodimer.

It carries out the reaction prephenate + S-adenosyl-L-methionine = carboxy-S-adenosyl-L-methionine + 3-phenylpyruvate + H2O. Catalyzes the conversion of S-adenosyl-L-methionine (SAM) to carboxy-S-adenosyl-L-methionine (Cx-SAM). This chain is Carboxy-S-adenosyl-L-methionine synthase, found in Klebsiella pneumoniae subsp. pneumoniae (strain ATCC 700721 / MGH 78578).